Consider the following 503-residue polypeptide: ATP synthase subunit beta (503 aa).

Position 157–164 (157–164 (GGAGVGKT)) interacts with ATP.

It belongs to the ATPase alpha/beta chains family. F-type ATPases have 2 components, CF(1) - the catalytic core - and CF(0) - the membrane proton channel. CF(1) has five subunits: alpha(3), beta(3), gamma(1), delta(1), epsilon(1). CF(0) has three main subunits: a(1), b(2) and c(9-12). The alpha and beta chains form an alternating ring which encloses part of the gamma chain. CF(1) is attached to CF(0) by a central stalk formed by the gamma and epsilon chains, while a peripheral stalk is formed by the delta and b chains.

The protein localises to the cell inner membrane. The catalysed reaction is ATP + H2O + 4 H(+)(in) = ADP + phosphate + 5 H(+)(out). Produces ATP from ADP in the presence of a proton gradient across the membrane. The catalytic sites are hosted primarily by the beta subunits. In Flavobacterium johnsoniae (strain ATCC 17061 / DSM 2064 / JCM 8514 / BCRC 14874 / CCUG 350202 / NBRC 14942 / NCIMB 11054 / UW101) (Cytophaga johnsonae), this protein is ATP synthase subunit beta.